A 115-amino-acid chain; its full sequence is UPF0127 protein PH1112 (115 aa).

This sequence belongs to the UPF0127 family.

The protein is UPF0127 protein PH1112 of Pyrococcus horikoshii (strain ATCC 700860 / DSM 12428 / JCM 9974 / NBRC 100139 / OT-3).